The sequence spans 68 residues: Elastase inhibitor AFLEI (68 aa).

An intrachain disulfide couples Cys-5 to Cys-67.

It is found in the secreted. Its function is as follows. Elastase inhibitor. Inhibitor of A.flavus elastase with a Ki of 40 nM. Inhibitor of A.fumigatus elastase and human leukocyte elastase. Inhibits the fibrinogenase and collagenase activities of A.flavus elastase. Does not inhibit porcine pancreatic elastase, trypsin, chymotrypsin, thrombin or A.acutus AC1-proteinase. The protein is Elastase inhibitor AFLEI of Aspergillus flavus.